The sequence spans 512 residues: 2,3-bisphosphoglycerate-independent phosphoglycerate mutase (512 aa).

Residues D12 and S62 each coordinate Mn(2+). S62 acts as the Phosphoserine intermediate in catalysis. Substrate is bound by residues H123, R153–D154, R185, R191, R260–R263, and K333. Residues D400, H404, D441, H442, and H460 each coordinate Mn(2+).

The protein belongs to the BPG-independent phosphoglycerate mutase family. Monomer. It depends on Mn(2+) as a cofactor.

It carries out the reaction (2R)-2-phosphoglycerate = (2R)-3-phosphoglycerate. Its pathway is carbohydrate degradation; glycolysis; pyruvate from D-glyceraldehyde 3-phosphate: step 3/5. Functionally, catalyzes the interconversion of 2-phosphoglycerate and 3-phosphoglycerate. In Clostridium perfringens (strain 13 / Type A), this protein is 2,3-bisphosphoglycerate-independent phosphoglycerate mutase.